The following is a 196-amino-acid chain: Cell division protein SepF (196 aa).

The segment at 15-80 (VEDDEEFNEP…PKRSASTFSK (66 aa)) is disordered. The span at 56–79 (RPAQSTPKPQAQTAAPKRSASTFS) shows a compositional bias: polar residues.

Belongs to the SepF family. Homodimer. Interacts with FtsZ.

It is found in the cytoplasm. Its function is as follows. Cell division protein that is part of the divisome complex and is recruited early to the Z-ring. Probably stimulates Z-ring formation, perhaps through the cross-linking of FtsZ protofilaments. Its function overlaps with FtsA. The sequence is that of Cell division protein SepF from Lactococcus lactis subsp. cremoris (strain SK11).